A 565-amino-acid polypeptide reads, in one-letter code: NAD-dependent malic enzyme (565 aa).

Tyr-104 (proton donor) is an active-site residue. NAD(+) is bound at residue Arg-157. Residue Lys-175 is the Proton acceptor of the active site. A divalent metal cation-binding residues include Glu-246, Asp-247, and Asp-270. Residues Asp-270 and Asn-418 each contribute to the NAD(+) site.

Belongs to the malic enzymes family. In terms of assembly, homotetramer. Requires Mg(2+) as cofactor. Mn(2+) serves as cofactor.

The catalysed reaction is (S)-malate + NAD(+) = pyruvate + CO2 + NADH. It catalyses the reaction oxaloacetate + H(+) = pyruvate + CO2. The sequence is that of NAD-dependent malic enzyme from Salmonella heidelberg (strain SL476).